The chain runs to 173 residues: Small ribosomal subunit protein mS25 (173 aa).

Belongs to the mitochondrion-specific ribosomal protein mS25 family. In terms of assembly, component of the mitochondrial ribosome small subunit (28S) which comprises a 12S rRNA and about 30 distinct proteins.

It localises to the mitochondrion. The protein is Small ribosomal subunit protein mS25 (MRPS25) of Bos taurus (Bovine).